Consider the following 62-residue polypeptide: Photosystem II reaction center protein Z (62 aa).

2 consecutive transmembrane segments (helical) span residues 8–28 and 41–61; these read LVVA…ITLS and VTAS…NSFV.

It belongs to the PsbZ family. PSII is composed of 1 copy each of membrane proteins PsbA, PsbB, PsbC, PsbD, PsbE, PsbF, PsbH, PsbI, PsbJ, PsbK, PsbL, PsbM, PsbT, PsbX, PsbY, PsbZ, Psb30/Ycf12, at least 3 peripheral proteins of the oxygen-evolving complex and a large number of cofactors. It forms dimeric complexes.

The protein localises to the plastid. It localises to the chloroplast thylakoid membrane. Functionally, may control the interaction of photosystem II (PSII) cores with the light-harvesting antenna, regulates electron flow through the 2 photosystem reaction centers. PSII is a light-driven water plastoquinone oxidoreductase, using light energy to abstract electrons from H(2)O, generating a proton gradient subsequently used for ATP formation. The chain is Photosystem II reaction center protein Z from Cyanidioschyzon merolae (strain NIES-3377 / 10D) (Unicellular red alga).